We begin with the raw amino-acid sequence, 106 residues long: Thioredoxin (106 aa).

Residues 2-106 (VNFLKTKADF…GLREKIKKNK (105 aa)) form the Thioredoxin domain. Residues Cys-32 and Cys-35 each act as nucleophile in the active site. Residues Cys-32 and Cys-35 are joined by a disulfide bond.

The protein belongs to the thioredoxin family.

Its subcellular location is the cytoplasm. Functionally, participates in various redox reactions through the reversible oxidation of its active center dithiol to a disulfide and catalyzes dithiol-disulfide exchange reactions. This Geodia cydonium (Sponge) protein is Thioredoxin (THIO).